Reading from the N-terminus, the 152-residue chain is Membrane-spanning 4-domains subfamily A member 13 (152 aa).

The next 4 membrane-spanning stretches (helical) occupy residues 1-21 (MIGI…MGQI), 32-52 (TYKT…VFLI), 66-86 (TLII…LTII), and 111-131 (ILLF…IYSC).

The protein belongs to the MS4A family.

The protein resides in the membrane. Functionally, may be involved in signal transduction as a component of a multimeric receptor complex. The sequence is that of Membrane-spanning 4-domains subfamily A member 13 (MS4A13) from Homo sapiens (Human).